The primary structure comprises 316 residues: Ribosomal RNA small subunit methyltransferase H (316 aa).

S-adenosyl-L-methionine-binding positions include 35–37, aspartate 55, tyrosine 79, aspartate 100, and glutamine 107; that span reads GGH.

This sequence belongs to the methyltransferase superfamily. RsmH family.

It localises to the cytoplasm. It catalyses the reaction cytidine(1402) in 16S rRNA + S-adenosyl-L-methionine = N(4)-methylcytidine(1402) in 16S rRNA + S-adenosyl-L-homocysteine + H(+). Functionally, specifically methylates the N4 position of cytidine in position 1402 (C1402) of 16S rRNA. In Nitrosospira multiformis (strain ATCC 25196 / NCIMB 11849 / C 71), this protein is Ribosomal RNA small subunit methyltransferase H.